A 119-amino-acid polypeptide reads, in one-letter code: Large ribosomal subunit protein uL18 (119 aa).

This sequence belongs to the universal ribosomal protein uL18 family. Part of the 50S ribosomal subunit; part of the 5S rRNA/L5/L18/L25 subcomplex. Contacts the 5S and 23S rRNAs.

Its function is as follows. This is one of the proteins that bind and probably mediate the attachment of the 5S RNA into the large ribosomal subunit, where it forms part of the central protuberance. This Dinoroseobacter shibae (strain DSM 16493 / NCIMB 14021 / DFL 12) protein is Large ribosomal subunit protein uL18.